A 237-amino-acid chain; its full sequence is Ribonuclease PH (237 aa).

Residues R86 and 124–126 (GTR) each bind phosphate.

Belongs to the RNase PH family. In terms of assembly, homohexameric ring arranged as a trimer of dimers.

It carries out the reaction tRNA(n+1) + phosphate = tRNA(n) + a ribonucleoside 5'-diphosphate. Its function is as follows. Phosphorolytic 3'-5' exoribonuclease that plays an important role in tRNA 3'-end maturation. Removes nucleotide residues following the 3'-CCA terminus of tRNAs; can also add nucleotides to the ends of RNA molecules by using nucleoside diphosphates as substrates, but this may not be physiologically important. Probably plays a role in initiation of 16S rRNA degradation (leading to ribosome degradation) during starvation. The chain is Ribonuclease PH from Methylobacterium nodulans (strain LMG 21967 / CNCM I-2342 / ORS 2060).